Consider the following 462-residue polypeptide: MSSVAKKDKRTMSVTALINRAWPMTPSPQQQQQMVPSTQHSNFLHAMATPSTTPNVELDIQWLNIESGFMSPMSPPEMKPDTAMLDGFRDDSTPPPPFKNYPPNHPLSGSKHLCSICGDRASGKHYGVYSCEGCKGFFKRTVRKDLTYACREDKNCIIDKRQRNRCQYCRYQKCLACGMKREAVQEERQRAARRTEDAHPSSSVQELSIERLLELEALVADSAEELQILRVGPESGVPAKYRAPVSSLCQIGNKQIAALIVWARDIPHFGQLEIDDQILLIKGSWNELLLFAIAWRSMEFLNDERENVDSRNTAPPQLICLMPGMTLHRNSALQAGVGQIFDRVLSELSLKMRSLRMDQAECVALKAIILLNPDVKGLKNKQEVDVLREKMFLCLDEYCRRSRGGEEGRFAALLLRLPALRSISLKSFEHLYLFHLVAEGSVSSYIRDALCNHAPPIDTNIM.

The tract at residues 1–113 (MSSVAKKDKR…NHPLSGSKHL (113 aa)) is modulating. NR C4-type zinc fingers lie at residues 114–134 (CSICGDRASGKHYGVYSCEGC) and 150–174 (CREDKNCIIDKRQRNRCQYCRYQKC). A DNA-binding region (nuclear receptor) is located at residues 114–179 (CSICGDRASG…RYQKCLACGM (66 aa)). The hinge stretch occupies residues 180–201 (KREAVQEERQRAARRTEDAHPS). The 250-residue stretch at 204 to 453 (VQELSIERLL…SYIRDALCNH (250 aa)) folds into the NR LBD domain.

This sequence belongs to the nuclear hormone receptor family. NR2 subfamily. Heterodimer of USP and ECR. In terms of tissue distribution, abundant expression seen in males and ovaries.

The protein localises to the nucleus. In Bombyx mori (Silk moth), this protein is Protein ultraspiracle homolog (USP).